The primary structure comprises 504 residues: Histidine ammonia-lyase (504 aa).

Positions 142–144 (ASG) form a cross-link, 5-imidazolinone (Ala-Gly). Serine 143 is modified (2,3-didehydroalanine (Ser)).

This sequence belongs to the PAL/histidase family. In terms of processing, contains an active site 4-methylidene-imidazol-5-one (MIO), which is formed autocatalytically by cyclization and dehydration of residues Ala-Ser-Gly.

Its subcellular location is the cytoplasm. The catalysed reaction is L-histidine = trans-urocanate + NH4(+). Its pathway is amino-acid degradation; L-histidine degradation into L-glutamate; N-formimidoyl-L-glutamate from L-histidine: step 1/3. The sequence is that of Histidine ammonia-lyase from Staphylococcus aureus (strain USA300).